The chain runs to 108 residues: Movement protein TGB2 (108 aa).

The Cytoplasmic segment spans residues 1 to 14 (MPLTPPPDHSITYR). Residues 15–31 (ILAVGLCSCCAIYAATR) form a helical membrane-spanning segment. Residues 32–67 (STLPHTGDNLHSLPYGGKYSDGTKSICYSGPGPTPD) are Lumenal-facing. The helical transmembrane segment at 68 to 85 (IPTHLPALLVLVLVVAIY) threads the bilayer. The Cytoplasmic segment spans residues 86–108 (ASSRLDFSVNYRCSCRVHNRSGQ).

The protein belongs to the Tymovirales TGBp2 protein family.

It localises to the host endoplasmic reticulum membrane. Functionally, plays a role in viral cell-to-cell propagation, by facilitating genome transport to neighboring plant cells through plasmosdesmata,. The polypeptide is Movement protein TGB2 (Strawberry mild yellow edge-associated virus (SMYEaV)).